The chain runs to 344 residues: Ribosomal RNA large subunit methyltransferase Cfr (344 aa).

Catalysis depends on Glu-88, which acts as the Proton acceptor. Positions 95-324 constitute a Radical SAM core domain; it reads KKGWESFCIS…HANGISVATR (230 aa). A disulfide bond links Cys-102 and Cys-335. Cys-109, Cys-113, and Cys-116 together coordinate [4Fe-4S] cluster. Residues 155–156, Ser-186, 209–211, and Asn-290 contribute to the S-adenosyl-L-methionine site; these read GE and SLH. The S-methylcysteine intermediate role is filled by Cys-335.

The protein belongs to the radical SAM superfamily. RlmN family. Cfr subfamily. [4Fe-4S] cluster serves as cofactor.

The protein localises to the cytoplasm. It carries out the reaction adenosine(2503) in 23S rRNA + 2 reduced [2Fe-2S]-[ferredoxin] + 2 S-adenosyl-L-methionine = 8-methyladenosine(2503) in 23S rRNA + 5'-deoxyadenosine + L-methionine + 2 oxidized [2Fe-2S]-[ferredoxin] + S-adenosyl-L-homocysteine. In terms of biological role, specifically methylates position 8 of adenine 2503 in 23S rRNA. Confers resistance to some classes of antibiotics. The protein is Ribosomal RNA large subunit methyltransferase Cfr of Lachnoclostridium phytofermentans (strain ATCC 700394 / DSM 18823 / ISDg) (Clostridium phytofermentans).